Consider the following 109-residue polypeptide: Iron-sulfur cluster assembly protein CyaY (109 aa).

Belongs to the frataxin family.

Functionally, involved in iron-sulfur (Fe-S) cluster assembly. May act as a regulator of Fe-S biogenesis. The protein is Iron-sulfur cluster assembly protein CyaY of Bordetella avium (strain 197N).